The following is a 208-amino-acid chain: Small ribosomal subunit protein uS4 (208 aa).

Residues 96-159 (SRLDNIVYRL…KKNEKVLEAL (64 aa)) form the S4 RNA-binding domain.

This sequence belongs to the universal ribosomal protein uS4 family. In terms of assembly, part of the 30S ribosomal subunit. Contacts protein S5. The interaction surface between S4 and S5 is involved in control of translational fidelity.

Its function is as follows. One of the primary rRNA binding proteins, it binds directly to 16S rRNA where it nucleates assembly of the body of the 30S subunit. With S5 and S12 plays an important role in translational accuracy. This Mycoplasma capricolum subsp. capricolum (strain California kid / ATCC 27343 / NCTC 10154) protein is Small ribosomal subunit protein uS4.